The sequence spans 614 residues: Probable ATP-dependent RNA helicase DDX5 (614 aa).

Basic and acidic residues predominate over residues 1 to 15 (MSSYSSDRDRGRDRG). The disordered stretch occupies residues 1-39 (MSSYSSDRDRGRDRGFGAPRFGGSRTGPLSGKKFGNPGE). Residue Ser24 is modified to Phosphoserine. Lys32 carries the N6-acetyllysine; alternate modification. Lys32 is covalently cross-linked (Glycyl lysine isopeptide (Lys-Gly) (interchain with G-Cter in SUMO2); alternate). N6-acetyllysine is present on residues Lys33 and Lys40. Lys45 is covalently cross-linked (Glycyl lysine isopeptide (Lys-Gly) (interchain with G-Cter in SUMO2)). A Glycyl lysine isopeptide (Lys-Gly) (interchain with G-Cter in SUMO2); alternate cross-link involves residue Lys53. A Glycyl lysine isopeptide (Lys-Gly) (interchain with G-Cter in SUMO); alternate cross-link involves residue Lys53. Lys53 participates in a covalent cross-link: Glycyl lysine isopeptide (Lys-Gly) (interchain with G-Cter in SUMO1); alternate. A Q motif motif is present at residues 94-122 (LNFYEANFPANVMDVIARQNFTEPTAIQA). Residues 114 to 116 (FTE), Gln121, and 138 to 145 (AQTGSGKT) contribute to the ATP site. The Helicase ATP-binding domain maps to 125-300 (WPVALSGLDM…EDFLKDYIHI (176 aa)). Lys236 carries the N6-acetyllysine modification. A DEAD box motif is present at residues 248–251 (DEAD). A Phosphotyrosine modification is found at Tyr297. In terms of domain architecture, Helicase C-terminal spans 328–475 (KLIRLMEEIM…AINPKLLQLV (148 aa)). Residues Lys340, Lys343, Lys388, Lys391, Lys411, Lys437, Lys451, and Lys470 each participate in a glycyl lysine isopeptide (Lys-Gly) (interchain with G-Cter in SUMO2) cross-link. The interval 477–504 (DRGSGRSRGRGGMKDDRRDRYSAGKRGG) is disordered. Residues 477 to 614 (DRGSGRSRGR…GYPMPTGYSQ (138 aa)) form a transactivation domain region. Phosphoserine is present on Ser480. Over residues 488–498 (GMKDDRRDRYS) the composition is skewed to basic and acidic residues. Residue Lys523 forms a Glycyl lysine isopeptide (Lys-Gly) (interchain with G-Cter in SUMO2) linkage.

This sequence belongs to the DEAD box helicase family. DDX5/DBP2 subfamily. In terms of assembly, identified in the spliceosome C complex. Component of a ribonucleoprotein complex containing mRNAs and RNA-binding proteins including DDX5, HNRNPH2 and SRSF1 as well as splicing regulator ARVCF. Interacts with RBM4; the interaction occurs in an RNA-independent manner. Interacts with AGO1 and AGO2. Interacts with ESR1, AR, EP300, CREBBP, POLR2A, TP53, RUNX2 and HDAC1. Self-associates. Interacts with DDX17. Interacts with BRDT. The large PER complex involved in the repression of transcriptional termination is composed of at least PER2, CDK9, DDX5, DHX9, NCBP1 and POLR2A (active). Interacts with DHX36; this interaction occurs in a RNA-dependent manner. Interacts with NUPR1. Interacts with ERCC6. Interacts with DDX3X in the cytoplasm; this interaction may be more efficient when both proteins are unphosphorylated. In terms of processing, sumoylated; sumoylation, promoted by PIAS1, promotes interaction with HDAC1 and transcriptional repression activity. Sumoylation also significantly increases stability, and reduces polyubiquitination. Polyubiquitinated, leading to proteasomal degradation. Post-translationally, weakly phosphorylated in the G1/S phase of the cell cycle and much more at G2/M, especially at Thr and Tyr residues.

It localises to the nucleus. The protein resides in the nucleolus. The protein localises to the cytoplasm. It catalyses the reaction ATP + H2O = ADP + phosphate + H(+). In terms of biological role, involved in the alternative regulation of pre-mRNA splicing; its RNA helicase activity is necessary for increasing tau exon 10 inclusion and occurs in a RBM4-dependent manner. Binds to the tau pre-mRNA in the stem-loop region downstream of exon 10. The rate of ATP hydrolysis is highly stimulated by single-stranded RNA. Involved in transcriptional regulation; the function is independent of the RNA helicase activity. Transcriptional coactivator for androgen receptor AR but probably not ESR1. Synergizes with DDX17 and SRA1 RNA to activate MYOD1 transcriptional activity and involved in skeletal muscle differentiation. Transcriptional coactivator for p53/TP53 and involved in p53/TP53 transcriptional response to DNA damage and p53/TP53-dependent apoptosis. Transcriptional coactivator for RUNX2 and involved in regulation of osteoblast differentiation. Acts as a transcriptional repressor in a promoter-specific manner; the function probably involves association with histone deacetylases, such as HDAC1. As component of a large PER complex is involved in the inhibition of 3' transcriptional termination of circadian target genes such as PER1 and NR1D1 and the control of the circadian rhythms. This chain is Probable ATP-dependent RNA helicase DDX5 (Ddx5), found in Mus musculus (Mouse).